The chain runs to 179 residues: ATP synthase subunit delta (179 aa).

This sequence belongs to the ATPase delta chain family. F-type ATPases have 2 components, F(1) - the catalytic core - and F(0) - the membrane proton channel. F(1) has five subunits: alpha(3), beta(3), gamma(1), delta(1), epsilon(1). F(0) has three main subunits: a(1), b(2) and c(10-14). The alpha and beta chains form an alternating ring which encloses part of the gamma chain. F(1) is attached to F(0) by a central stalk formed by the gamma and epsilon chains, while a peripheral stalk is formed by the delta and b chains.

Its subcellular location is the cell membrane. In terms of biological role, f(1)F(0) ATP synthase produces ATP from ADP in the presence of a proton or sodium gradient. F-type ATPases consist of two structural domains, F(1) containing the extramembraneous catalytic core and F(0) containing the membrane proton channel, linked together by a central stalk and a peripheral stalk. During catalysis, ATP synthesis in the catalytic domain of F(1) is coupled via a rotary mechanism of the central stalk subunits to proton translocation. Its function is as follows. This protein is part of the stalk that links CF(0) to CF(1). It either transmits conformational changes from CF(0) to CF(1) or is implicated in proton conduction. The protein is ATP synthase subunit delta of Clostridium botulinum (strain Alaska E43 / Type E3).